The sequence spans 165 residues: Large ribosomal subunit protein uL10 (165 aa).

The protein belongs to the universal ribosomal protein uL10 family. In terms of assembly, part of the ribosomal stalk of the 50S ribosomal subunit. The N-terminus interacts with L11 and the large rRNA to form the base of the stalk. The C-terminus forms an elongated spine to which L12 dimers bind in a sequential fashion forming a multimeric L10(L12)X complex.

In terms of biological role, forms part of the ribosomal stalk, playing a central role in the interaction of the ribosome with GTP-bound translation factors. This is Large ribosomal subunit protein uL10 from Mycoplasmopsis synoviae (strain 53) (Mycoplasma synoviae).